The sequence spans 677 residues: Methionine--tRNA ligase (677 aa).

Residues 14-24 (PYANGSIHLGH) carry the 'HIGH' region motif. Zn(2+)-binding residues include C145, C148, C158, and C161. Positions 331–335 (KMSKS) match the 'KMSKS' region motif. An ATP-binding site is contributed by K334. The tRNA-binding domain maps to 575–677 (AFAAVDLRIA…SGAKPGQRVK (103 aa)).

Belongs to the class-I aminoacyl-tRNA synthetase family. MetG type 1 subfamily. Homodimer. Zn(2+) is required as a cofactor.

The protein resides in the cytoplasm. It carries out the reaction tRNA(Met) + L-methionine + ATP = L-methionyl-tRNA(Met) + AMP + diphosphate. Is required not only for elongation of protein synthesis but also for the initiation of all mRNA translation through initiator tRNA(fMet) aminoacylation. The sequence is that of Methionine--tRNA ligase from Pseudomonas aeruginosa (strain LESB58).